A 136-amino-acid polypeptide reads, in one-letter code: DNA-directed RNA polymerase subunit omega (136 aa).

Residues Ser-90–Ser-102 are compositionally biased toward low complexity. Positions Ser-90 to Glu-136 are disordered. Positions Ser-103–Arg-120 are enriched in basic and acidic residues.

This sequence belongs to the RNA polymerase subunit omega family. The RNAP catalytic core consists of 2 alpha, 1 beta, 1 beta' and 1 omega subunit. When a sigma factor is associated with the core the holoenzyme is formed, which can initiate transcription.

It carries out the reaction RNA(n) + a ribonucleoside 5'-triphosphate = RNA(n+1) + diphosphate. In terms of biological role, promotes RNA polymerase assembly. Latches the N- and C-terminal regions of the beta' subunit thereby facilitating its interaction with the beta and alpha subunits. This is DNA-directed RNA polymerase subunit omega from Methylorubrum populi (strain ATCC BAA-705 / NCIMB 13946 / BJ001) (Methylobacterium populi).